The sequence spans 473 residues: Ion-translocating oxidoreductase complex subunit C (473 aa).

4Fe-4S ferredoxin-type domains follow at residues 328–357 (KNESISEKTCIRCGYCSYVCPVNLLPQQLY) and 368–396 (TKKHYVLDCIECKACEKVCPSYIPLVKYF). [4Fe-4S] cluster-binding residues include Cys337, Cys340, Cys343, Cys347, Cys376, Cys379, Cys382, and Cys386.

This sequence belongs to the 4Fe4S bacterial-type ferredoxin family. RnfC subfamily. The complex is composed of six subunits: RnfA, RnfB, RnfC, RnfD, RnfE and RnfG. It depends on [4Fe-4S] cluster as a cofactor.

The protein resides in the cell inner membrane. In terms of biological role, part of a membrane-bound complex that couples electron transfer with translocation of ions across the membrane. The chain is Ion-translocating oxidoreductase complex subunit C from Buchnera aphidicola subsp. Acyrthosiphon pisum (strain APS) (Acyrthosiphon pisum symbiotic bacterium).